A 290-amino-acid chain; its full sequence is Enoyl-CoA hydratase, mitochondrial (290 aa).

The transit peptide at 1 to 27 (MAALRALLPRVRAPLRPWLFCPVQRSF) directs the protein to the mitochondrion. Substrate-binding positions include 98–101 (ADIK) and Gly141. Lys101 carries the N6-acetyllysine; alternate modification. The residue at position 101 (Lys101) is an N6-succinyllysine; alternate. At Lys204 the chain carries N6-succinyllysine. Residue Lys211 is modified to N6-acetyllysine.

It belongs to the enoyl-CoA hydratase/isomerase family. In terms of assembly, homohexamer; dimer of trimers.

Its subcellular location is the mitochondrion matrix. The catalysed reaction is a (3S)-3-hydroxyacyl-CoA = a (2E)-enoyl-CoA + H2O. It carries out the reaction a (3E)-enoyl-CoA = a 4-saturated (2E)-enoyl-CoA. The enzyme catalyses (3E)-hexenoyl-CoA = (2E)-hexenoyl-CoA. It catalyses the reaction (3S)-3-hydroxybutanoyl-CoA = (2E)-butenoyl-CoA + H2O. The catalysed reaction is 3-hydroxyisovaleryl-CoA = 3-methylbut-2-enoyl-CoA + H2O. It carries out the reaction 3-hydroxypropanoyl-CoA = acryloyl-CoA + H2O. The enzyme catalyses 3-hydroxybutanoyl-CoA = (2E)-butenoyl-CoA + H2O. It catalyses the reaction 2-methylpropenoyl-CoA + H2O = (S)-3-hydroxyisobutanoyl-CoA. The catalysed reaction is (3S)-hydroxyhexanoyl-CoA = (2E)-hexenoyl-CoA + H2O. It carries out the reaction (3S)-hydroxydecanoyl-CoA = (2E)-decenoyl-CoA + H2O. It participates in lipid metabolism; fatty acid beta-oxidation. Converts unsaturated trans-2-enoyl-CoA species ((2E)-enoyl-CoA) to the corresponding 3(S)-3-hydroxyacyl-CoA species through addition of a water molecule to the double bond. Catalyzes the hydration of medium- and short-chained fatty enoyl-CoA thioesters from 4 carbons long (C4) up to C16. Has high substrate specificity for crotonyl-CoA ((2E)-butenoyl-CoA) and moderate specificity for acryloyl-CoA, 3-methylcrotonyl-CoA (3-methyl-(2E)-butenoyl-CoA) and methacrylyl-CoA ((2E)-2-methylpropenoyl-CoA). Can bind tiglyl-CoA (2-methylcrotonoyl-CoA), but hydrates only a small amount of this substrate. Plays a key role in the beta-oxidation spiral of short- and medium-chain fatty acid oxidation. At a lower rate than the hydratase reaction, catalyzes the isomerase reaction of trans-3-enoyl-CoA species (such as (3E)-hexenoyl-CoA) to trans-2-enoyl-CoA species (such as (2E)-hexenoyl-CoA), which are subsequently hydrated to 3(S)-3-hydroxyacyl-CoA species (such as (3S)-hydroxyhexanoyl-CoA). The sequence is that of Enoyl-CoA hydratase, mitochondrial (ECHS1) from Bos taurus (Bovine).